The primary structure comprises 1027 residues: C2 and GRAM domain-containing protein At5g50170 (1027 aa).

The C2 1 domain maps to 1 to 103; sequence MRLYVYILQA…ENQTLLPTWF (103 aa). The segment covering 158–167 has biased composition (basic and acidic residues); that stretch reads SPKDLISSRD. Disordered stretches follow at residues 158-177 and 201-223; these read SPKD…HDGK and LHDE…DQCS. Residues 168 to 177 show a composition bias toward basic residues; it reads GKRRKHHDGK. The segment covering 206–223 has biased composition (polar residues); sequence SVGQSVNSNYEDATDQCS. The VASt 1 domain occupies 253–426; that stretch reads TGGVLVDQKY…LLAKTYKTLD (174 aa). A helical membrane pass occupies residues 452 to 472; the sequence is FLYFWSSSVICAVLLSVYVVV. Positions 516 to 639 constitute a C2 2 domain; sequence TVHFVQARLH…TADELADLSV (124 aa). The 64-residue stretch at 693 to 756 folds into the GRAM domain; it reads AFQKLFGLPH…LWEDIDDIQV (64 aa). Residues 855-1018 enclose the VASt 2 domain; sequence MMSKVYTCDL…VIFDLFQKES (164 aa).

It localises to the membrane. The polypeptide is C2 and GRAM domain-containing protein At5g50170 (Arabidopsis thaliana (Mouse-ear cress)).